The chain runs to 265 residues: Small ribosomal subunit protein eS1 (265 aa).

2 disordered regions span residues 1–24 (MTQG…RTID) and 240–265 (HEKK…LLAQ). Positions 240-253 (HEKKGEKATGRDGA) are enriched in basic and acidic residues.

This sequence belongs to the eukaryotic ribosomal protein eS1 family. As to quaternary structure, component of the small ribosomal subunit. Mature ribosomes consist of a small (40S) and a large (60S) subunit. The 40S subunit contains about 33 different proteins and 1 molecule of RNA (18S). The 60S subunit contains about 49 different proteins and 3 molecules of RNA (25S, 5.8S and 5S).

It localises to the cytoplasm. This Tetrahymena thermophila (strain SB210) protein is Small ribosomal subunit protein eS1.